Reading from the N-terminus, the 189-residue chain is GTP cyclohydrolase 1 (189 aa).

Residues Cys-78, His-81, and Cys-150 each contribute to the Zn(2+) site.

This sequence belongs to the GTP cyclohydrolase I family. As to quaternary structure, homomer.

It catalyses the reaction GTP + H2O = 7,8-dihydroneopterin 3'-triphosphate + formate + H(+). Its pathway is cofactor biosynthesis; 7,8-dihydroneopterin triphosphate biosynthesis; 7,8-dihydroneopterin triphosphate from GTP: step 1/1. The polypeptide is GTP cyclohydrolase 1 (Bacillus mycoides (strain KBAB4) (Bacillus weihenstephanensis)).